We begin with the raw amino-acid sequence, 174 residues long: B3 domain-containing protein At3g06220 (174 aa).

The TF-B3 DNA-binding region spans 8-101 (PRFYTVFLSC…SYEVSIYGRG (94 aa)). A disordered region spans residues 114 to 174 (EISDESESDN…ISDASDSDYY (61 aa)). Acidic residues-rich tracts occupy residues 139 to 150 (ENSDDTEGDNDS) and 164 to 174 (EISDASDSDYY).

It is found in the nucleus. The protein is B3 domain-containing protein At3g06220 of Arabidopsis thaliana (Mouse-ear cress).